We begin with the raw amino-acid sequence, 184 residues long: ATP synthase subunit b, chloroplastic (184 aa).

The chain crosses the membrane as a helical span at residues 27-49 (LATNLINLSVVIGVLIFFGKGVL).

Belongs to the ATPase B chain family. In terms of assembly, F-type ATPases have 2 components, F(1) - the catalytic core - and F(0) - the membrane proton channel. F(1) has five subunits: alpha(3), beta(3), gamma(1), delta(1), epsilon(1). F(0) has four main subunits: a(1), b(1), b'(1) and c(10-14). The alpha and beta chains form an alternating ring which encloses part of the gamma chain. F(1) is attached to F(0) by a central stalk formed by the gamma and epsilon chains, while a peripheral stalk is formed by the delta, b and b' chains.

Its subcellular location is the plastid. The protein localises to the chloroplast thylakoid membrane. F(1)F(0) ATP synthase produces ATP from ADP in the presence of a proton or sodium gradient. F-type ATPases consist of two structural domains, F(1) containing the extramembraneous catalytic core and F(0) containing the membrane proton channel, linked together by a central stalk and a peripheral stalk. During catalysis, ATP synthesis in the catalytic domain of F(1) is coupled via a rotary mechanism of the central stalk subunits to proton translocation. In terms of biological role, component of the F(0) channel, it forms part of the peripheral stalk, linking F(1) to F(0). The sequence is that of ATP synthase subunit b, chloroplastic from Jasminum nudiflorum (Winter jasmine).